An 86-amino-acid chain; its full sequence is Large ribosomal subunit protein uL30m (86 aa).

The segment at 67 to 86 (QQRELRKSNPGFIVEKRTID) is disordered.

It belongs to the universal ribosomal protein uL30 family. Component of the mitochondrial large ribosomal subunit (mt-LSU). Mature yeast 74S mitochondrial ribosomes consist of a small (37S) and a large (54S) subunit. The 37S small subunit contains a 15S ribosomal RNA (15S mt-rRNA) and 34 different proteins. The 54S large subunit contains a 21S rRNA (21S mt-rRNA) and 46 different proteins.

The protein resides in the mitochondrion. In terms of biological role, component of the mitochondrial ribosome (mitoribosome), a dedicated translation machinery responsible for the synthesis of mitochondrial genome-encoded proteins, including at least some of the essential transmembrane subunits of the mitochondrial respiratory chain. The mitoribosomes are attached to the mitochondrial inner membrane and translation products are cotranslationally integrated into the membrane. The chain is Large ribosomal subunit protein uL30m (MRPL33) from Saccharomyces cerevisiae (strain ATCC 204508 / S288c) (Baker's yeast).